The chain runs to 427 residues: Glutamate-1-semialdehyde 2,1-aminomutase 2 (427 aa).

The residue at position 267 (Lys267) is an N6-(pyridoxal phosphate)lysine.

The protein belongs to the class-III pyridoxal-phosphate-dependent aminotransferase family. HemL subfamily. As to quaternary structure, homodimer. Requires pyridoxal 5'-phosphate as cofactor.

Its subcellular location is the cytoplasm. The enzyme catalyses (S)-4-amino-5-oxopentanoate = 5-aminolevulinate. Its pathway is porphyrin-containing compound metabolism; protoporphyrin-IX biosynthesis; 5-aminolevulinate from L-glutamyl-tRNA(Glu): step 2/2. The polypeptide is Glutamate-1-semialdehyde 2,1-aminomutase 2 (Staphylococcus saprophyticus subsp. saprophyticus (strain ATCC 15305 / DSM 20229 / NCIMB 8711 / NCTC 7292 / S-41)).